The following is an 884-amino-acid chain: MTDVVRDFDALYAKLEAPPHNLRLVLECCAPESGPLDLAAIQERKSYTCCALNNRRNCVLHKCVVVVFGTALDARLRAPSAEFDAQNNLRGTFMLDGRFLSFPNIMMNNNVLMHNFYDKLYAKHCKRMFLYGNVDAEKHINRAIQLVYDKATRRLFARDVYASDYVVTDDLNAVLETYLASSGKWRPLDHLFRYSKAHKQQLVDHIKMIMHHDICYSIDNLANKIIYKHAYLMELLLTSTVLQHYQKRAGENEALKRRLECEGEPPASKRRKAQSVLYGKESKKIVDSVVNGRLIYCVSKTFSKQRRSFPNQHDNCSNNNIEISLPVLKYRVGSEVTRITNDSVRQKMLKQKKDFVKFIGSFFHGEMTVAGKKFFLCRNARLPNVDYAMVADKFAELQQFGLVAPVHDLAHCADGALLIAFNDRPTNLQCARADVPKIVYRLKRDRCPIELKASSNILYVNHHEGMVCIAKRVRIGAPVNASINALLTPYEYHYKNSLFHAPTVSACEIEESDDVRCLMSKLEQYYFAEYTHLFYTIPVPKMIVALTNLKNAMPVLRYSTLGTAPVGLSVAVGDHVLMNNKMVKLWTLVRDSKLMTAEDPYIPHMALPIRLYNHKVNKLKGKLALAGKAVPTLKFVASSGPHNCVVLPDNMVQYFAGTVLSGAKIVWAHDGKRCMVEACTNGAHNVYKVYVFFRRTRNQAVESLAASMTLAGDAVIVRTAVVTSTDDLEGVKVCSVHGQKGVLNRSEDLTEWMAEDGTHAQICLSPVSYLSRQSNFERLERKYVVRGGNHADPRARRYPIFNIPYMLFNNTPDNIYKEFNKKNYTGHEKVEGTRFDQWTKNQSFVGNRLAESLQWMRGGSNLPQNCGEFEVVSSLLMCNNVVMK.

This sequence belongs to the RNA polymerase beta chain family.

It catalyses the reaction RNA(n) + a ribonucleoside 5'-triphosphate = RNA(n+1) + diphosphate. Its function is as follows. Required for late and very late gene expression. May be a component of the novel RNA polymerase activity induced by baculovirus infection. The sequence is that of Probable DNA-directed RNA polymerase subunit beta (LEF-8) from Orgyia pseudotsugata multicapsid polyhedrosis virus (OpMNPV).